Consider the following 544-residue polypeptide: uncharacterized protein (544 aa).

This is an uncharacterized protein from Acanthamoeba polyphaga mimivirus (APMV).